We begin with the raw amino-acid sequence, 400 residues long: Peptidase M20 domain-containing protein C757.05c (400 aa).

An N-terminal signal peptide occupies residues 1–25; the sequence is MTMKISVWSLLIVIGYHLWMSPVLA. An N-linked (GlcNAc...) asparagine glycan is attached at Asn-80. Residue Asp-152 coordinates Zn(2+). Glu-186 serves as the catalytic Proton acceptor. Glu-187 contacts Zn(2+).

This sequence belongs to the peptidase M20A family. Requires Zn(2+) as cofactor.

The protein resides in the secreted. The protein is Peptidase M20 domain-containing protein C757.05c of Schizosaccharomyces pombe (strain 972 / ATCC 24843) (Fission yeast).